The sequence spans 358 residues: DNA replication and repair protein RecF (358 aa).

30–37 (GANGSGKT) contacts ATP.

This sequence belongs to the RecF family.

The protein resides in the cytoplasm. Its function is as follows. The RecF protein is involved in DNA metabolism; it is required for DNA replication and normal SOS inducibility. RecF binds preferentially to single-stranded, linear DNA. It also seems to bind ATP. The polypeptide is DNA replication and repair protein RecF (Acinetobacter baylyi (strain ATCC 33305 / BD413 / ADP1)).